The sequence spans 372 residues: Alanine dehydrogenase (372 aa).

Residues R15 and K75 each coordinate substrate. The Proton donor/acceptor role is filled by H96. NAD(+)-binding positions include S134, 178 to 179 (IA), D198, S220, 239 to 240 (VL), 267 to 270 (IAID), R280, and 299 to 302 (VANM). D270 functions as the Proton donor/acceptor in the catalytic mechanism.

It belongs to the AlaDH/PNT family. Homohexamer.

Its subcellular location is the cytoplasm. It catalyses the reaction L-alanine + NAD(+) + H2O = pyruvate + NH4(+) + NADH + H(+). It functions in the pathway amino-acid degradation; L-alanine degradation via dehydrogenase pathway; NH(3) and pyruvate from L-alanine: step 1/1. Its activity is regulated as follows. Inhibited by p-chloromercuribenzoate and HgCl(2) and by Cu(2+) and Pb(2+) salts, unaffected by amino acids such as D-alanine and beta-alanine or by nucleotides or nucleosides. Its function is as follows. Catalyzes the reversible reductive amination of pyruvate to L-alanine. Prefers L-alanine for oxidative deamination, other substrates are poorly reactive. In the other direction 2-oxobutyrate is almost as reactive as pyruvate. Ammonia is the sole amino donor for the reductive amination of pyruvate, NADPH is inert. Reductive amination proceeds through a sequential, ordered ternary-binary mechanism, where NADH binds first followed by ammonia and pyruvate; the products are released in the order L-alanine and NAD(+). A key factor in the assimilation of L-alanine as an energy source via the tricarboxylic acid cycle during sporulation. The chain is Alanine dehydrogenase (ald) from Lysinibacillus sphaericus (Bacillus sphaericus).